The chain runs to 294 residues: MLENLSTEHRNEKTMNLDEMNIKEVLQSMNEEDRTVALAVEKEIEHIEKVVRVVIQSFEEEGRLIYIGAGTSGRLGILDAVECPPTFGTDDKMVQGFIAGGLKAFTKAVEGAEDREELAEEDLKSIGLNEKDTVIGIAASGRTPYVIGGLKYANSVGASTASISCNKNAEISKYAKLNVEVETGAEILTGSTRLKAGTAQKLVLNMISTASMIGVGKVYKNLMVDVQSTNEKLVERSKRIIVEATGVSYEVAAEHYEKAERNVKAAIVMVLLQCEYGEALEKLKVAKGFVKKAL.

Residues 54 to 217 (VIQSFEEEGR…STASMIGVGK (164 aa)) enclose the SIS domain. E82 functions as the Proton donor in the catalytic mechanism. E113 is a catalytic residue.

It belongs to the GCKR-like family. MurNAc-6-P etherase subfamily. In terms of assembly, homodimer.

The enzyme catalyses N-acetyl-D-muramate 6-phosphate + H2O = N-acetyl-D-glucosamine 6-phosphate + (R)-lactate. It functions in the pathway amino-sugar metabolism; N-acetylmuramate degradation. Its function is as follows. Specifically catalyzes the cleavage of the D-lactyl ether substituent of MurNAc 6-phosphate, producing GlcNAc 6-phosphate and D-lactate. This Bacillus cereus (strain ZK / E33L) protein is N-acetylmuramic acid 6-phosphate etherase.